Consider the following 305-residue polypeptide: Methionyl-tRNA formyltransferase (305 aa).

Residue 111–114 participates in (6S)-5,6,7,8-tetrahydrofolate binding; it reads SLLP.

It belongs to the Fmt family.

The catalysed reaction is L-methionyl-tRNA(fMet) + (6R)-10-formyltetrahydrofolate = N-formyl-L-methionyl-tRNA(fMet) + (6S)-5,6,7,8-tetrahydrofolate + H(+). Its function is as follows. Attaches a formyl group to the free amino group of methionyl-tRNA(fMet). The formyl group appears to play a dual role in the initiator identity of N-formylmethionyl-tRNA by promoting its recognition by IF2 and preventing the misappropriation of this tRNA by the elongation apparatus. This is Methionyl-tRNA formyltransferase from Campylobacter jejuni subsp. doylei (strain ATCC BAA-1458 / RM4099 / 269.97).